An 867-amino-acid polypeptide reads, in one-letter code: Glucans biosynthesis glucosyltransferase H (867 aa).

The disordered stretch occupies residues 71-91 (DDEGRTQLETMPKATRSSISP). 6 consecutive transmembrane segments (helical) span residues 139-156 (YILL…TWYM), 194-216 (ILIL…LMGF), 518-540 (VMSY…LQVV), 568-590 (IALL…LLIW), 603-625 (VTIS…MLFH), and 680-702 (FLFW…VFSS).

It belongs to the glycosyltransferase 2 family. OpgH subfamily.

The protein localises to the cell inner membrane. The protein operates within glycan metabolism; osmoregulated periplasmic glucan (OPG) biosynthesis. In terms of biological role, involved in the biosynthesis of osmoregulated periplasmic glucans (OPGs). The protein is Glucans biosynthesis glucosyltransferase H of Nitrosomonas europaea (strain ATCC 19718 / CIP 103999 / KCTC 2705 / NBRC 14298).